The sequence spans 611 residues: MTDKEKRLERQSRIRNFSIIAHIDHGKSTLADRILEKTSAITQREMKEQLLDSMDLERERGITIKLNSVQLKYKAKDGEEYIFHLIDTPGHVDFTYEVSRSLAACEGAILVVDAAQGIEAQTLANVYLALDNDLEILPVINKIDLPSAEPERVRQEVEDVIGLDASDAVLASAKAGIGIEDILEQIVEKVPAPAGDPEAPLKALIFDSLYDAYRGVVAYIRVVEGTVKPGQKIKMMATGKEFEVIEVGVFTPKAQPADELTVGDVGYLTAAIKNVGDTRVGDTITSAVKPAAEALPGYRKLNPMVYCGLYPIDTAKYNDLREALEKLELNDSSLQYEAETSQALGFGFRCGFLGMLHMEIIQERIEREFKIDLITTAPSVIYDVYMTDGEKIIVDNPSNMPDPQKIERVEEPYVKATMMVPNDYVGAVMELCQGKRGNFIDMQYLDANRVSIVYEMPLAEIVYEFFDQLKSSTKGYASFDYELIGYKPSKLVKMDIMLNGEKIDALSFIVHRDYAYERGKVIVEKLKELIPRQHFEVPIQAAIGQKIVARSTIKAMRKNVLAKCYGGDISRKRKLLEKQKEGKRRMKQVGSVEVPQEAFMAVLKMDDSPKK.

Residues Ser12–Ala194 form the tr-type G domain. Residues Asp24–Thr29 and Asn141–Asp144 each bind GTP.

This sequence belongs to the TRAFAC class translation factor GTPase superfamily. Classic translation factor GTPase family. LepA subfamily.

The protein localises to the cell membrane. The catalysed reaction is GTP + H2O = GDP + phosphate + H(+). In terms of biological role, required for accurate and efficient protein synthesis under certain stress conditions. May act as a fidelity factor of the translation reaction, by catalyzing a one-codon backward translocation of tRNAs on improperly translocated ribosomes. Back-translocation proceeds from a post-translocation (POST) complex to a pre-translocation (PRE) complex, thus giving elongation factor G a second chance to translocate the tRNAs correctly. Binds to ribosomes in a GTP-dependent manner. The polypeptide is Elongation factor 4 (Bacillus velezensis (strain DSM 23117 / BGSC 10A6 / LMG 26770 / FZB42) (Bacillus amyloliquefaciens subsp. plantarum)).